The primary structure comprises 622 residues: Cytochrome c oxidase subunit 1 (622 aa).

Residues 1 to 27 (MLNALTEKRTRGSMLWDYLTTVDHKKI) lie on the Extracellular side of the membrane. A helical transmembrane segment spans residues 28 to 46 (AILYLVAGGFFFLVGGIEA). At 47 to 68 (MFIRIQLAKPENAFLSAQAYNE) the chain is on the cytoplasmic side. Residues 69 to 88 (VMTMHGTTMIFLAAMPLLFA) form a helical membrane-spanning segment. His73 provides a ligand contact to Fe(II)-heme a. Residues 89 to 110 (LMNAVVPLQIGARDVSFPFLNA) are Extracellular-facing. Residues 111 to 128 (LGFWLFFFGGIFLNLSWF) traverse the membrane as a helical segment. At 129 to 159 (LGGAPDAGWTSYASLSLHSKGHGIDFFVLGL) the chain is on the cytoplasmic side. Residues 160-178 (QISGLGTLIAGINFLATII) form a helical membrane-spanning segment. Residues 179–196 (NMRAPGMTYMRLPLFTWT) are Extracellular-facing. The helical transmembrane segment at 197 to 215 (TFVASALILFAFPPLTVGL) threads the bilayer. Topologically, residues 216-241 (ALMMLDRLFGTNFFNPELGGNTVIWE) are cytoplasmic. The chain crosses the membrane as a helical span at residues 242 to 261 (HLFWIFGHPEVYILILPAFG). Residues His249 and Tyr253 each coordinate Cu cation. The segment at residues 249–253 (HPEVY) is a cross-link (1'-histidyl-3'-tyrosine (His-Tyr)). At 262 to 284 (IFSEVIPVFARKRLFGYSSMVFA) the chain is on the extracellular side. A helical membrane pass occupies residues 285 to 304 (IVLIGFLGFMVWVHHMFTTG). Cu cation-binding residues include His298 and His299. The Cytoplasmic segment spans residues 305-312 (LGPIANAI). The helical transmembrane segment at 313 to 331 (FAVATMAIAIPTGIKIFNW) threads the bilayer. The Extracellular segment spans residues 332–346 (LLTIWGGNVKYTTAM). The chain crosses the membrane as a helical span at residues 347 to 366 (LYAVSFIPSFVLGGVTGVML). At 367 to 374 (AAAAADYQ) the chain is on the cytoplasmic side. The helical transmembrane segment at 375–394 (FHDTYFVVAHFHYVIIGGVV) threads the bilayer. Heme a3 is bound at residue His384. Residue His386 coordinates Fe(II)-heme a. Residues 395-421 (FGLLAGVHFWWPKMFGKILHETMGKIS) lie on the Extracellular side of the membrane. Residues 422–441 (FVLFFIGFHLTFFIQHFVGL) form a helical membrane-spanning segment. Over 442–459 (MGMPRRVYTFLPGQGLET) the chain is Cytoplasmic. The chain crosses the membrane as a helical span at residues 460-479 (GNLISTIGAFFMAAAVILLL). Residues 480-552 (VNVIWTSVKG…EPVDDIHMPN (73 aa)) are Extracellular-facing. Residues 553–572 (GSILPLIISFGLFVAAFGLL) traverse the membrane as a helical segment. Over 573 to 580 (YRSDYAWG) the chain is Cytoplasmic. The helical transmembrane segment at 581–604 (LPVIFIGLGITFITMLLRSVIDDH) threads the bilayer. Residues 605 to 622 (GYHIHKEELPNDDKGVKA) are Cytoplasmic-facing.

This sequence belongs to the heme-copper respiratory oxidase family. Cu(2+) is required as a cofactor. Requires heme as cofactor.

It localises to the cell membrane. The catalysed reaction is 4 Fe(II)-[cytochrome c] + O2 + 8 H(+)(in) = 4 Fe(III)-[cytochrome c] + 2 H2O + 4 H(+)(out). Its pathway is energy metabolism; oxidative phosphorylation. Cytochrome c oxidase is the component of the respiratory chain that catalyzes the reduction of oxygen to water. Subunits 1-3 form the functional core of the enzyme complex. Co I is the catalytic subunit of the enzyme. Electrons originating in cytochrome c are transferred via the copper A center of subunit 2 and heme a of subunit 1 to the bimetallic center formed by heme a3 and copper B. This cytochrome c oxidase shows proton pump activity across the membrane in addition to the electron transfer. This Bacillus subtilis (strain 168) protein is Cytochrome c oxidase subunit 1 (ctaD).